We begin with the raw amino-acid sequence, 273 residues long: 2,3,4,5-tetrahydropyridine-2,6-dicarboxylate N-succinyltransferase (273 aa).

The substrate site is built by arginine 104 and aspartate 141.

The protein belongs to the transferase hexapeptide repeat family. In terms of assembly, homotrimer.

It is found in the cytoplasm. The catalysed reaction is (S)-2,3,4,5-tetrahydrodipicolinate + succinyl-CoA + H2O = (S)-2-succinylamino-6-oxoheptanedioate + CoA. It functions in the pathway amino-acid biosynthesis; L-lysine biosynthesis via DAP pathway; LL-2,6-diaminopimelate from (S)-tetrahydrodipicolinate (succinylase route): step 1/3. In Aromatoleum aromaticum (strain DSM 19018 / LMG 30748 / EbN1) (Azoarcus sp. (strain EbN1)), this protein is 2,3,4,5-tetrahydropyridine-2,6-dicarboxylate N-succinyltransferase.